A 411-amino-acid chain; its full sequence is Probable indole-3-pyruvate monooxygenase YUCCA4 (411 aa).

FAD is bound at residue glycine 21–glycine 26. Glycine 183–glycine 188 is a binding site for NADP(+).

The protein belongs to the FMO family. FAD serves as cofactor. Expressed in leaves, stems, flowers, buds and siliques. Detected in the apical gynoecium and in the developing ovules.

The protein resides in the cytoplasm. The protein localises to the endoplasmic reticulum membrane. It catalyses the reaction indole-3-pyruvate + NADPH + O2 + H(+) = (indol-3-yl)acetate + CO2 + NADP(+) + H2O. It functions in the pathway plant hormone metabolism; auxin biosynthesis. Involved in auxin biosynthesis. Both isoforms are catalitically active. Involved during embryogenesis and seedling development. Required for the formation of floral organs and vascular tissues. Belongs to the set of redundant YUCCA genes probably responsible for auxin biosynthesis in shoots. The polypeptide is Probable indole-3-pyruvate monooxygenase YUCCA4 (YUC4) (Arabidopsis thaliana (Mouse-ear cress)).